Here is a 341-residue protein sequence, read N- to C-terminus: Mytilin-2 (341 aa).

The signal sequence occupies residues 1–24; that stretch reads MFKQSYQLCLVFLLFVCFYQSVKG.

As to expression, component of the organic matrix of calcified shell layers like nacre and prisms.

It localises to the secreted. This is Mytilin-2 from Mytilus californianus (California mussel).